A 291-amino-acid polypeptide reads, in one-letter code: uncharacterized protein (291 aa).

A PNPLA domain is found at 5 to 196 (GVFSGGGVKG…LSNFPIWLFS (192 aa)). The GXGXXG motif lies at 9 to 14 (GGGVKG). Residues 34–50 (VAGTSAGAIIAAFIASG) form a helical membrane-spanning segment. Residues 36 to 40 (GTSAG) carry the GXSXG motif. The active-site Nucleophile is Ser38. The Proton acceptor role is filled by Asp183. A DGA/G motif is present at residues 183–185 (DGG).

It is found in the cell membrane. In terms of biological role, probable lipid hydrolase. This is an uncharacterized protein from Bacillus subtilis (strain 168).